A 149-amino-acid polypeptide reads, in one-letter code: uncharacterized protein (149 aa).

2 disordered regions span residues 24 to 74 and 129 to 149; these read TSQG…NDLE and AIQD…PRAP. Positions 28–42 are enriched in basic and acidic residues; sequence EDVKPEPKPEVDEKV. Positions 102-131 form a coiled coil; that stretch reads SELESLKEKVSSATSMEELREIMEEFRAIQ.

This is an uncharacterized protein from Archaeoglobus fulgidus (strain ATCC 49558 / DSM 4304 / JCM 9628 / NBRC 100126 / VC-16).